The sequence spans 436 residues: Methylenetetrahydrofolate--tRNA-(uracil-5-)-methyltransferase TrmFO (436 aa).

Residue 8–13 (GGGLAG) participates in FAD binding.

This sequence belongs to the MnmG family. TrmFO subfamily. The cofactor is FAD.

The protein resides in the cytoplasm. It carries out the reaction uridine(54) in tRNA + (6R)-5,10-methylene-5,6,7,8-tetrahydrofolate + NADH + H(+) = 5-methyluridine(54) in tRNA + (6S)-5,6,7,8-tetrahydrofolate + NAD(+). The catalysed reaction is uridine(54) in tRNA + (6R)-5,10-methylene-5,6,7,8-tetrahydrofolate + NADPH + H(+) = 5-methyluridine(54) in tRNA + (6S)-5,6,7,8-tetrahydrofolate + NADP(+). In terms of biological role, catalyzes the folate-dependent formation of 5-methyl-uridine at position 54 (M-5-U54) in all tRNAs. The protein is Methylenetetrahydrofolate--tRNA-(uracil-5-)-methyltransferase TrmFO of Syntrophomonas wolfei subsp. wolfei (strain DSM 2245B / Goettingen).